A 1325-amino-acid chain; its full sequence is Protein PHYTOCHROME-DEPENDENT LATE-FLOWERING (1325 aa).

Polar residues-rich tracts occupy residues 313–331 (IGST…SVSG) and 504–515 (NFPQTSWNVNPG). 5 disordered regions span residues 313-371 (IGST…MPGL), 462-558 (EPFE…EFSG), 593-616 (ANEA…NSLP), 852-875 (VAGQ…NSTQ), and 1160-1325 (QQQQ…GNNS). The span at 518–529 (IEKEPKKEEQFS) shows a compositional bias: basic and acidic residues. Over residues 596-607 (AMQQRQHQAQMA) the composition is skewed to low complexity. Over residues 863 to 875 (HGNTGNTPNNSTQ) the composition is skewed to polar residues. Over residues 1160 to 1224 (QQQQQQQLQQ…QQQATASPLQ (65 aa)) the composition is skewed to low complexity. Positions 1225 to 1239 (SVLSPPQVGSPSAGI) are enriched in polar residues. Residues 1240-1262 (TQQQLQQSSPQQMSQRTPMSPQQ) show a composition bias toward low complexity. 2 stretches are compositionally biased toward polar residues: residues 1263 to 1286 (VNQR…TSNL) and 1293 to 1325 (PQLS…GNNS).

As to quaternary structure, component of a red light-dependent nuclear complex made of PHL, PHYB and CO. Interacts directly with PHYB and CO; CO binding requires the presence of PHYB. As to expression, mostly expressed in cotyledons and leaves, both in mesophyll and vasculature cells. Also present in roots, hypocotyls and shoot apices.

The protein localises to the nucleus. It is found in the nuclear body. The protein resides in the cytoplasmic granule. It localises to the cytoplasm. In terms of biological role, triggers photoperiod-monitored flowering by repressing PHYB-dependent flowering negative regulation, probably through physical interactions with PHYB and CO. This is Protein PHYTOCHROME-DEPENDENT LATE-FLOWERING from Arabidopsis thaliana (Mouse-ear cress).